The sequence spans 367 residues: Small ribosomal subunit biogenesis GTPase RsgA (367 aa).

Residues 112–267 (AEQVLATNVD…VIDTPGLREL (156 aa)) form the CP-type G domain. Residues 157-160 (NKSD) and 209-217 (GSSGAGKST) contribute to the GTP site. Zn(2+) contacts are provided by Cys291, Cys296, His298, and Cys304.

The protein belongs to the TRAFAC class YlqF/YawG GTPase family. RsgA subfamily. Monomer. Associates with 30S ribosomal subunit, binds 16S rRNA. It depends on Zn(2+) as a cofactor.

The protein resides in the cytoplasm. Its function is as follows. One of several proteins that assist in the late maturation steps of the functional core of the 30S ribosomal subunit. Helps release RbfA from mature subunits. May play a role in the assembly of ribosomal proteins into the subunit. Circularly permuted GTPase that catalyzes slow GTP hydrolysis, GTPase activity is stimulated by the 30S ribosomal subunit. This chain is Small ribosomal subunit biogenesis GTPase RsgA, found in Opitutus terrae (strain DSM 11246 / JCM 15787 / PB90-1).